The primary structure comprises 235 residues: MNKRVLVKFSGEALAGAEGYGIDTKILDYIAEEIKSLVENGIEVAIVIGGGNIIRGVTAAADGVIKRTSADYMGMLGTVINGVAMQEALEYKGLSARLQTAIKMEQIAEPFIVRKAMRHFEKGRVVIFGAGTGNPYFTTDTGATLRATEIGASMLIKATKVNGVYDKDPMKYPDAQKLETLSYDRALEDQIKVMDDTAIALAKDNKLPIAVTNMNEKGNLLRIVKGDYSKCSIVK.

Residue 8–11 (KFSG) participates in ATP binding. The involved in allosteric activation by GTP stretch occupies residues 16 to 21 (GAEGYG). A UMP-binding site is contributed by Gly-50. ATP-binding residues include Gly-51 and Arg-55. UMP contacts are provided by residues Asp-71 and 132-139 (TGNPYFTT). Residues Thr-159, Tyr-165, and Asp-168 each contribute to the ATP site.

Belongs to the UMP kinase family. Homohexamer.

The protein resides in the cytoplasm. The catalysed reaction is UMP + ATP = UDP + ADP. Its pathway is pyrimidine metabolism; CTP biosynthesis via de novo pathway; UDP from UMP (UMPK route): step 1/1. With respect to regulation, allosterically activated by GTP. Inhibited by UTP. In terms of biological role, catalyzes the reversible phosphorylation of UMP to UDP. The chain is Uridylate kinase from Aliarcobacter butzleri (strain RM4018) (Arcobacter butzleri).